A 1909-amino-acid polypeptide reads, in one-letter code: Plexin-B3 (1909 aa).

A signal peptide spans M1–A44. The Sema domain maps to H45–V471. Residues H45–Q1255 are Extracellular-facing. A glycan (N-linked (GlcNAc...) asparagine) is linked at N51. Cystine bridges form between C98–C107 and C132–C140. The N-linked (GlcNAc...) asparagine glycan is linked to N231. 8 disulfide bridges follow: C267–C370, C283–C315, C333–C357, C474–C491, C480–C525, C483–C500, C494–C506, and C562–C580. The PSI 1 domain maps to A473–L526. N-linked (GlcNAc...) asparagine glycosylation occurs at N615. PSI domains are found at residues D620–P682 and D787–P833. N802, N900, N957, N1101, and N1218 each carry an N-linked (GlcNAc...) asparagine glycan. 4 IPT/TIG domains span residues P835–Q925, P927–T1012, P1015–Q1145, and A1159–E1244. The chain crosses the membrane as a helical span at residues A1256 to Y1276. Residues R1277–L1909 are Cytoplasmic-facing.

Belongs to the plexin family. Interacts (via cytoplasmic domain) with RAC1 and ARHGDIA. Binds MET and MST1R. Interacts (via cytoplasmic domain) with FSCN1. Interacts with RIT2/RIN. May form homodimers (via Sema domain). As to expression, expression detected in Purkinje and granular cells in cerebellum, and in brain neocortex but not in corpus callosum. Expressed in glioma cells and embryonic kidney cells (at protein level). Expressed in brain, liver, pancreas and placenta, with weak expression detected also in lung and kidney. Expressed in several glioma cell lines.

It is found in the cell membrane. In terms of biological role, receptor for SEMA5A that plays a role in axon guidance, invasive growth and cell migration. Stimulates neurite outgrowth and mediates Ca(2+)/Mg(2+)-dependent cell aggregation. In glioma cells, SEMA5A stimulation of PLXNB3 results in the disassembly of F-actin stress fibers, disruption of focal adhesions and cellular collapse as well as inhibition of cell migration and invasion through ARHGDIA-mediated inactivation of RAC1. This is Plexin-B3 (PLXNB3) from Homo sapiens (Human).